Here is a 120-residue protein sequence, read N- to C-terminus: Large ribosomal subunit protein bL19 (120 aa).

Belongs to the bacterial ribosomal protein bL19 family.

Its function is as follows. This protein is located at the 30S-50S ribosomal subunit interface and may play a role in the structure and function of the aminoacyl-tRNA binding site. This chain is Large ribosomal subunit protein bL19, found in Picosynechococcus sp. (strain ATCC 27264 / PCC 7002 / PR-6) (Agmenellum quadruplicatum).